The sequence spans 274 residues: 3-methyl-2-oxobutanoate hydroxymethyltransferase (274 aa).

Positions 49 and 88 each coordinate Mg(2+). 3-methyl-2-oxobutanoate-binding positions include 49-50, Asp88, and Lys118; that span reads DS. Position 120 (Glu120) interacts with Mg(2+). Glu187 serves as the catalytic Proton acceptor.

The protein belongs to the PanB family. In terms of assembly, homodecamer; pentamer of dimers. Mg(2+) is required as a cofactor.

The protein localises to the cytoplasm. It carries out the reaction 3-methyl-2-oxobutanoate + (6R)-5,10-methylene-5,6,7,8-tetrahydrofolate + H2O = 2-dehydropantoate + (6S)-5,6,7,8-tetrahydrofolate. It functions in the pathway cofactor biosynthesis; (R)-pantothenate biosynthesis; (R)-pantoate from 3-methyl-2-oxobutanoate: step 1/2. Catalyzes the reversible reaction in which hydroxymethyl group from 5,10-methylenetetrahydrofolate is transferred onto alpha-ketoisovalerate to form ketopantoate. The sequence is that of 3-methyl-2-oxobutanoate hydroxymethyltransferase from Parvibaculum lavamentivorans (strain DS-1 / DSM 13023 / NCIMB 13966).